Consider the following 1802-residue polypeptide: MVSLKIKKILLLVSLLNAIEAYSNDTIYSTSYNNGIESTPSYSTSAISSTGSSNKENAITSSSETTTMAGQYGESGSTTIMDEQETGTSSQYISVTTTTQTSDTMSSVKKSTEIATPSSSIVPTPLQSYSDESQISQTLSHNPKSVAESDSDTTSSESSSSVIISTSDSSAVPREISPIITTDSQISKEEGTLAQTSSISETTRIAQMVTRVSQISSITAASTIDGFSSESTQTDFSNTVSFENSVEEEYAMSKSQLSESYSSSSTVYSGGESTADKTSSSPITSFSSSYSQTTSTETSESSRVAVGVSRPSSITQTTSIDSFSMSEVELSTYYDLSAGNYPDQELIVDRPATSSTAETSSEASQGVSRESNTFAVSSISTTNFIVSSASDTVVSTSSTNTVPYSSVHSTFVHATSSSTYISSSLYSSPSLSASVSSHFGVAPFPSAYISFSSVPVAVSSTYTSSPSASVVVPSAYASSPSVPVAVSSTYTSSPSAPAAISSTYTSSPSAPVAVSSTYTSSPSAPAAISSTYTSSPSAPVAVSSTYTSSPSAPAAISSTYTSSPSAPVAVSSTYTSSPSAPVAISSTYTSSPSVPVAVSSTYTSSPSAPAAISSTYTSSPSAPVAVSSTYTSSPSAPAAISSTYTSSPSVPVAVSSTYTSSPSAPAAISSTYTSSPSVPVAVSSTYTSSPSAPAAISSTYTSSPSAPVAVSSTYTSSPSAPAAISSTYTSSPSAPVAVSSTYTSSPSAPAAISSTYTSSPSAPVAVSSTYTSSPSALVVLSSTSTSSPYDIVYSPSTFAAISSGYTPSPSASVAMSSTSSSSPYDIVYSLSSSASRSSIATYEFSPSPSTSLPTSSTYTYFSSAYAFEFSSERYSTTSTIAPTQIHSTLSRITDFLLQTSMAIQSIVSQQISTSSTLNDEIHSSALSVFNPSASNLVETSLIISSTQASITSPKNSAKISSLQSQLSSSTKNPYDTANKNTETSGRSTVVSNFLYTSSAAKPDNEKFSATPTEITTISSSSHAYSLSIPSSHNSVTGLSHNFVDSSKSATSFGYSSSSISSIKLSKETIPASKSVSNTQERITSFTSTLRANSQSEKSEGRNSVGSLQSSHISSNPSLSTNTKVDSKSLSRKVSKTMGENGEETGLTTTKTQYKSSSETSGSYSRSFTKISIGPATTAVQTQASTNSVFTAPALSTYPTTPYPSPNSYAWLPTAIIVESSETGPTTASFNPSITGSLPNAIEPAVAVSEPINHTLITIGFTAALNYVFLVQNPLSSAQIFNFLPLVLKYPFSNTSSELDNSIGELSTFILSYRSGSSTTTLSPKSISSLSVVKKKKNQQKKNATKSTEDLHPPQVDTSSIAVKKIVPMVDSSKAYIVSVAEVYFPTEAVTYLQQLILDENSTLYSNPQTPLRSLAGLIDSGIPLGGLTLYGSGDGGYVPSLTSSSVLDSSKGNSQNIDGTYKYGALDDFINSFTDSASAGKYAVKIIIFLIVLTIGVLLWLFVAFFAFRHRNILLKRHPRNCIGKSLNNERELESTELSRSSSGNQVYNEKPPESENESVYSAVDDHYIVTGENTVYNTIHRLHYTINDDGDLLYRDAIPLDFDQTNGDDGSGIDSIVRDCVYDKNQDATEAFLNDEESISGILDVDENGDIRLYDSYSDNEESNSFHLPDEVIENYNKNHLCETKLHGLGTESCTTDDPDTGNQITNEFSTGSQTCLPSTAYTTPLHTNSIKLHTLRYTESSLPKPNQTLFSNLEDLEIEDIDDNGSVSDVHIEELDALDEELYKRMSKVIKQQNHQTTKI.

The first 21 residues, M1–A21, serve as a signal peptide directing secretion. Residues Y22–K1485 lie on the Extracellular side of the membrane. The N-linked (GlcNAc...) asparagine glycan is linked to N24. Disordered stretches follow at residues I47–I176 and Y261–P311. Residues N54–M81 are compositionally biased toward polar residues. A compositionally biased stretch (low complexity) spans T88 to S107. The span at E113–P143 shows a compositional bias: polar residues. Composition is skewed to low complexity over residues S145–V172 and Y261–S302. The 1; approximate repeat unit spans residues S453–P480. Residues S453 to P788 form a 12 X 28 AA tandem repeats of S-[AV]-[P]-V-A-V-S-S-T-Y-T-S-S-P-S-A-P-A-A-I-S-S-T-Y-T-S-S-P region. Tandem repeats lie at residues S481–P508, S509–P536, S537–P564, S565–P592, S593–P620, S621–P648, S649–P676, S677–P704, S705–P732, S733–P760, and S761–P788. Disordered stretches follow at residues S961–S984 and E1067–R1165. 2 stretches are compositionally biased toward polar residues: residues T970–S984 and A1071–K1123. The segment covering T1136–R1165 has biased composition (low complexity). N-linked (GlcNAc...) asparagine glycosylation is found at N1252, N1293, N1342, and N1400. The chain crosses the membrane as a helical span at residues I1486 to F1506. The Cytoplasmic segment spans residues A1507–I1802. The tract at residues E1534–S1559 is disordered.

Belongs to the HKR1/MSB2 family. Could be O-glycosylated in the serine/threonine-rich domain.

Its subcellular location is the cell membrane. Its function is as follows. Plasma membrane signaling mucin that promotes activation of the MAPK for the filamentous growth pathway. May regulate beta-glucan synthesis. Overexpression provides resistance to HM-1 killer toxin. In Saccharomyces cerevisiae (strain ATCC 204508 / S288c) (Baker's yeast), this protein is Signaling mucin HKR1 (HKR1).